Here is a 185-residue protein sequence, read N- to C-terminus: Large ribosomal subunit protein bL25 (185 aa).

Belongs to the bacterial ribosomal protein bL25 family. CTC subfamily. As to quaternary structure, part of the 50S ribosomal subunit; part of the 5S rRNA/L5/L18/L25 subcomplex. Contacts the 5S rRNA. Binds to the 5S rRNA independently of L5 and L18.

In terms of biological role, this is one of the proteins that binds to the 5S RNA in the ribosome where it forms part of the central protuberance. The chain is Large ribosomal subunit protein bL25 from Chlamydia caviae (strain ATCC VR-813 / DSM 19441 / 03DC25 / GPIC) (Chlamydophila caviae).